Reading from the N-terminus, the 101-residue chain is Ascorbate-specific PTS system EIIB component (101 aa).

In terms of domain architecture, PTS EIIB type-2 spans Val3 to Phe96. Cys9 (phosphocysteine intermediate) is an active-site residue. The residue at position 9 (Cys9) is a Phosphocysteine.

The protein resides in the cytoplasm. It catalyses the reaction N(pros)-phospho-L-histidyl-[protein] + L-ascorbate(out) = L-ascorbate 6-phosphate(in) + L-histidyl-[protein]. The phosphoenolpyruvate-dependent sugar phosphotransferase system (sugar PTS), a major carbohydrate active transport system, catalyzes the phosphorylation of incoming sugar substrates concomitantly with their translocation across the cell membrane. The enzyme II UlaABC PTS system is involved in ascorbate transport. The protein is Ascorbate-specific PTS system EIIB component (ulaB) of Salmonella choleraesuis (strain SC-B67).